We begin with the raw amino-acid sequence, 492 residues long: Probable folate-biopterin transporter 5 (492 aa).

12 helical membrane-spanning segments follow: residues 46-66 (VFAV…LGHV), 92-112 (ISWI…PIFG), 117-137 (PYFI…SLQS), 142-162 (YLAL…DVTI), 186-206 (LSYS…VHLV), 210-230 (GVFG…VLFS), 264-285 (LYMF…YWFT), 298-318 (VGFI…LYNL), 328-348 (LFLW…ILVL), 361-381 (FIVV…MVIF), 396-416 (FFAL…WLGG), and 433-453 (WLAV…LFLV).

It belongs to the major facilitator superfamily. Folate-biopterin transporter (TC 2.A.71) family.

The protein localises to the membrane. Functionally, could mediate folate transport. The polypeptide is Probable folate-biopterin transporter 5 (Arabidopsis thaliana (Mouse-ear cress)).